A 343-amino-acid chain; its full sequence is Flap endonuclease 1 (343 aa).

The tract at residues 1–98 is N-domain; that stretch reads MGVPIGELIP…KELEKRREAR (98 aa). Residues Asp27, Asp80, Glu152, Glu154, Asp173, Asp175, and Asp236 each coordinate Mg(2+). The interval 116-258 is I-domain; the sequence is EARKYAQRAT…KALEIVKYSK (143 aa). An interaction with PCNA region spans residues 330–338; that stretch reads KQSTLESWF.

This sequence belongs to the XPG/RAD2 endonuclease family. FEN1 subfamily. In terms of assembly, interacts with PCNA. PCNA stimulates the nuclease activity without altering cleavage specificity. Mg(2+) serves as cofactor.

Its function is as follows. Structure-specific nuclease with 5'-flap endonuclease and 5'-3' exonuclease activities involved in DNA replication and repair. During DNA replication, cleaves the 5'-overhanging flap structure that is generated by displacement synthesis when DNA polymerase encounters the 5'-end of a downstream Okazaki fragment. Binds the unpaired 3'-DNA end and kinks the DNA to facilitate 5' cleavage specificity. Cleaves one nucleotide into the double-stranded DNA from the junction in flap DNA, leaving a nick for ligation. Also involved in the base excision repair (BER) pathway. Acts as a genome stabilization factor that prevents flaps from equilibrating into structures that lead to duplications and deletions. Also possesses 5'-3' exonuclease activity on nicked or gapped double-stranded DNA. In Pyrococcus abyssi (strain GE5 / Orsay), this protein is Flap endonuclease 1.